An 88-amino-acid chain; its full sequence is Small ribosomal subunit protein bS20 (88 aa).

It belongs to the bacterial ribosomal protein bS20 family.

Its function is as follows. Binds directly to 16S ribosomal RNA. The sequence is that of Small ribosomal subunit protein bS20 from Bartonella quintana (strain Toulouse) (Rochalimaea quintana).